The following is a 216-amino-acid chain: Ras-related protein Rab11A (216 aa).

Residues 19–27, 38–44, 67–71, 125–128, and 155–157 each bind GTP; these read GDSGVGKSN, CLESKST, DTAGQ, NKSD, and SAL. The short motif at 41–49 is the Effector region element; it reads SKSTIGVEF. 2 S-geranylgeranyl cysteine lipidation sites follow: Cys-213 and Cys-214.

Belongs to the small GTPase superfamily. Rab family.

Its subcellular location is the cell membrane. The protein is Ras-related protein Rab11A (RAB11A) of Nicotiana tabacum (Common tobacco).